The chain runs to 126 residues: Fluoride-specific ion channel FluC (126 aa).

The next 4 membrane-spanning stretches (helical) occupy residues 3–23, 39–59, 71–91, and 101–121; these read MILA…LTGV, TVNV…AHVW, VGVL…ALLV, and AYVA…LALI. 2 residues coordinate Na(+): Gly75 and Thr78.

It belongs to the fluoride channel Fluc/FEX (TC 1.A.43) family.

It is found in the cell inner membrane. The enzyme catalyses fluoride(in) = fluoride(out). Na(+) is not transported, but it plays an essential structural role and its presence is essential for fluoride channel function. Fluoride-specific ion channel. Important for reducing fluoride concentration in the cell, thus reducing its toxicity. The chain is Fluoride-specific ion channel FluC from Rhodospirillum centenum (strain ATCC 51521 / SW).